A 205-amino-acid chain; its full sequence is Holliday junction branch migration complex subunit RuvA (205 aa).

The interval 1–64 (MIGRLRGVLV…EDAQLLYGFI (64 aa)) is domain I. The tract at residues 65–143 (TKQERALFRL…SLLETSAGSE (79 aa)) is domain II. The tract at residues 144–156 (REFMLKSNYTPAP) is flexible linker. The domain III stretch occupies residues 157 to 205 (VVNTAEEDAIAALLSLGYKPAQASKAVSAAFKEGMSSEDLIKSSLKSML).

The protein belongs to the RuvA family. Homotetramer. Forms an RuvA(8)-RuvB(12)-Holliday junction (HJ) complex. HJ DNA is sandwiched between 2 RuvA tetramers; dsDNA enters through RuvA and exits via RuvB. An RuvB hexamer assembles on each DNA strand where it exits the tetramer. Each RuvB hexamer is contacted by two RuvA subunits (via domain III) on 2 adjacent RuvB subunits; this complex drives branch migration. In the full resolvosome a probable DNA-RuvA(4)-RuvB(12)-RuvC(2) complex forms which resolves the HJ.

It is found in the cytoplasm. Its function is as follows. The RuvA-RuvB-RuvC complex processes Holliday junction (HJ) DNA during genetic recombination and DNA repair, while the RuvA-RuvB complex plays an important role in the rescue of blocked DNA replication forks via replication fork reversal (RFR). RuvA specifically binds to HJ cruciform DNA, conferring on it an open structure. The RuvB hexamer acts as an ATP-dependent pump, pulling dsDNA into and through the RuvAB complex. HJ branch migration allows RuvC to scan DNA until it finds its consensus sequence, where it cleaves and resolves the cruciform DNA. In Shewanella woodyi (strain ATCC 51908 / MS32), this protein is Holliday junction branch migration complex subunit RuvA.